Consider the following 333-residue polypeptide: MKKCLFPLSVLAVIVATGCGNTSPYANDSYEKHANAPTFTTIDTAGIRIIGQNDTYLLPATNVKKGENMDIRPPAIPMAIIGNSVAQFDGERASIIYPSEKAEVYNIRQMARLLEERSIKFTTKDNQIETDWTNFGAKTDQGETLLRYQINQVGNQEANALVVSVLEAKRDDILFTPSQKEKERYTSSLLNQFIGELNADYRSQAQAVATPTTTGPVQTAIITDGNNHLALAMSSEFQQSWSKLGDALPQLGFETEEETVGRGYRKLNYKPLGATEWARLGVNRPELEDGEYSMQISAHGKQSSVVISDEDGNAISGDAAQAMYRALANLISK.

The N-terminal stretch at methionine 1–glycine 18 is a signal peptide. Residue cysteine 19 is the site of N-palmitoyl cysteine attachment. A lipid anchor (S-diacylglycerol cysteine) is attached at cysteine 19.

It belongs to the BamC family. As to quaternary structure, part of the Bam complex.

The protein localises to the cell outer membrane. Part of the outer membrane protein assembly complex, which is involved in assembly and insertion of beta-barrel proteins into the outer membrane. The protein is Outer membrane protein assembly factor BamC of Actinobacillus succinogenes (strain ATCC 55618 / DSM 22257 / CCUG 43843 / 130Z).